A 276-amino-acid chain; its full sequence is AT-hook motif nuclear-localized protein 17 (276 aa).

Over residues 1-10 the composition is skewed to basic and acidic residues; the sequence is MKGEYREQKS. 2 disordered regions span residues 1–80 and 212–248; these read MKGE…RDTD and AEEEQKHSAGTGEREGQSPPVSGGGEESGQMAGSGGE. Low complexity-rich tracts occupy residues 20–31 and 40–49; these read HQQQQQQQQQQH and SSTVTPTVDD. Positions 56–68 form a DNA-binding region, a.T hook; that stretch reads RRPRGRPPGSKNK. The PPC domain maps to 80–230; the sequence is DPPMSPYILE…GTGEREGQSP (151 aa). Residues 212–227 show a composition bias toward basic and acidic residues; it reads AEEEQKHSAGTGEREG. The segment covering 233 to 248 has biased composition (gly residues); it reads SGGGEESGQMAGSGGE.

The protein localises to the nucleus. Transcription factor that specifically binds AT-rich DNA sequences related to the nuclear matrix attachment regions (MARs). In Arabidopsis thaliana (Mouse-ear cress), this protein is AT-hook motif nuclear-localized protein 17.